We begin with the raw amino-acid sequence, 63 residues long: MPKNKDESQKAIVRTYYIIEGDKIKLKNKKCPRCGSIMAHHMKPVERWACGKCGYTEFIGKGK.

Zn(2+) contacts are provided by Cys31, Cys34, Cys50, and Cys53. The segment at 31-53 (CPRCGSIMAHHMKPVERWACGKC) adopts a C4-type zinc-finger fold.

The protein belongs to the eukaryotic ribosomal protein eS31 family. Part of the 30S ribosomal subunit. The cofactor is Zn(2+).

The chain is Small ribosomal subunit protein eS31 from Sulfurisphaera tokodaii (strain DSM 16993 / JCM 10545 / NBRC 100140 / 7) (Sulfolobus tokodaii).